Here is a 295-residue protein sequence, read N- to C-terminus: Bifunctional protein FolD (295 aa).

NADP(+)-binding positions include 166-168 (GRS), Ser-191, and Ile-232.

This sequence belongs to the tetrahydrofolate dehydrogenase/cyclohydrolase family. As to quaternary structure, homodimer.

It catalyses the reaction (6R)-5,10-methylene-5,6,7,8-tetrahydrofolate + NADP(+) = (6R)-5,10-methenyltetrahydrofolate + NADPH. The catalysed reaction is (6R)-5,10-methenyltetrahydrofolate + H2O = (6R)-10-formyltetrahydrofolate + H(+). Its pathway is one-carbon metabolism; tetrahydrofolate interconversion. Catalyzes the oxidation of 5,10-methylenetetrahydrofolate to 5,10-methenyltetrahydrofolate and then the hydrolysis of 5,10-methenyltetrahydrofolate to 10-formyltetrahydrofolate. This is Bifunctional protein FolD from Wolbachia pipientis subsp. Culex pipiens (strain wPip).